The chain runs to 309 residues: Large ribosomal subunit protein uL22m (309 aa).

The transit peptide at 1–25 (MNFHTARISQVGVISRALLSSVSRR) directs the protein to the mitochondrion. Residues 40-63 (SLFGSITENKPKEGKNRGDEDAGS) form a disordered region. Residues 48–59 (NKPKEGKNRGDE) are compositionally biased toward basic and acidic residues.

It belongs to the universal ribosomal protein uL22 family. In terms of assembly, component of the mitochondrial large ribosomal subunit (mt-LSU). Mature yeast 74S mitochondrial ribosomes consist of a small (37S) and a large (54S) subunit. The 37S small subunit contains a 15S ribosomal RNA (15S mt-rRNA) and 34 different proteins. The 54S large subunit contains a 21S rRNA (21S mt-rRNA) and 46 different proteins. uL22m forms the wall of the exit tunnel.

Its subcellular location is the mitochondrion. Component of the mitochondrial ribosome (mitoribosome), a dedicated translation machinery responsible for the synthesis of mitochondrial genome-encoded proteins, including at least some of the essential transmembrane subunits of the mitochondrial respiratory chain. The mitoribosomes are attached to the mitochondrial inner membrane and translation products are cotranslationally integrated into the membrane. The polypeptide is Large ribosomal subunit protein uL22m (MRPL22) (Saccharomyces cerevisiae (strain ATCC 204508 / S288c) (Baker's yeast)).